The primary structure comprises 1488 residues: Phenolphthiocerol/phthiocerol polyketide synthase subunit E (1488 aa).

The Ketosynthase family 3 (KS3) domain maps to 5-438; sequence ENAIAVVGMA…GTNAHVVLEE (434 aa). Residues Cys-184, His-320, and His-361 each act as for beta-ketoacyl synthase activity in the active site. Positions 551–868 are acyltransferase; it reads VFLFPGQGAQ…GELWSAGVEV (318 aa). The active-site For malonyltransferase activity is the Ser-641. Residues 930–1004 form the Carrier domain; sequence NGESQTEVTL…SLTAAVDASF (75 aa). Ser-965 is subject to O-(pantetheine 4'-phosphoryl)serine. 1286–1331 serves as a coordination point for NADP(+); the sequence is EGVVAVELEGEGRSVLRPDVDLRRTVGWFTTYYPVPLACATGLGAL.

NADP(+) serves as cofactor. It depends on pantetheine 4'-phosphate as a cofactor.

The catalysed reaction is icosanoyl-[(phenol)carboxyphthiodiolenone synthase] + 2 (S)-methylmalonyl-CoA + 3 malonyl-CoA + 5 NADPH + 10 H(+) = C32-carboxyphthiodiolenone-[(phenol)carboxyphthiodiolenone synthase] + 5 CO2 + 5 NADP(+) + 5 CoA + 2 H2O. It carries out the reaction docosanoyl-[(phenol)carboxyphthiodiolenone synthase] + 2 (S)-methylmalonyl-CoA + 3 malonyl-CoA + 5 NADPH + 10 H(+) = C34-carboxyphthiodiolenone-[(phenol)carboxyphthiodiolenone synthase] + 5 CO2 + 5 NADP(+) + 5 CoA + 2 H2O. It catalyses the reaction 17-(4-hydroxyphenyl)heptadecanoyl-[(phenol)carboxyphthiodiolenone synthase] + 2 (S)-methylmalonyl-CoA + 3 malonyl-CoA + 5 NADPH + 10 H(+) = C35-(phenol)carboxyphthiodiolenone-[(phenol)carboxyphthiodiolenone synthase] + 5 CO2 + 5 NADP(+) + 5 CoA + 2 H2O. The enzyme catalyses 19-(4-hydroxyphenyl)nonadecanoyl-[(phenol)carboxyphthiodiolenone synthase] + 2 (S)-methylmalonyl-CoA + 3 malonyl-CoA + 5 NADPH + 10 H(+) = C37-(phenol)carboxyphthiodiolenone-[(phenol)carboxyphthiodiolenone synthase] + 5 CO2 + 5 NADP(+) + 5 CoA + 2 H2O. It participates in lipid metabolism; fatty acid biosynthesis. Its function is as follows. Part of the PpsABCDE complex involved in the biosynthesis of the lipid core common to phthiocerols and phenolphthiocerols by successive additions of malonyl-CoA or methylmalonyl-CoA extender units. PpsA can accept as substrate the activated forms of either icosanoyl (C20), docosanoyl (C22) or lignoceroyl (C24) groups from FadD26, or a (4-hydroxyphenyl)-C17 or (4-hydroxyphenyl)-C19 fatty acyl from FadD29. PpsA initiates the biosynthesis and extends its substrate using a malonyl-CoA extender unit. The PpsB and PpsC proteins add the second and third malonyl-CoA extender units. PpsD adds an (R)-methylmalonyl unit and PpsE adds a second (R)-methylmalonyl unit. The incorporation of the methylmalonyl units results in formation of two branched methyl groups in the elongated product. The sequence is that of Phenolphthiocerol/phthiocerol polyketide synthase subunit E (ppsE) from Mycobacterium tuberculosis (strain CDC 1551 / Oshkosh).